The sequence spans 648 residues: Siderophore transporter MYCGRDRAFT_70577 (648 aa).

Basic and acidic residues-rich tracts occupy residues 1 to 11 and 29 to 46; these read MRTSSESHSRS and SASK…DTSI. Positions 1-58 are disordered; sequence MRTSSESHSRSDAFNGKNDASQVTVDSDSASKDHHDHDHHHKDTSINERQSQHVHQQA. The segment covering 47–58 has biased composition (polar residues); sequence NERQSQHVHQQA. 11 helical membrane-spanning segments follow: residues 79-99, 151-171, 205-225, 236-256, 303-323, 336-356, 409-429, 438-458, 468-488, 500-520, and 578-598; these read LLLY…ALDQ, VVVL…QGLA, AFWS…NGFI, WGLG…IWTL, LIGL…LNLA, IAML…EALL, TIFI…GGLI, TLMV…LDGN, LAVS…ARVG, VVIS…STIA, and GIIL…SCLM.

It belongs to the major facilitator superfamily.

Its subcellular location is the cell membrane. Its function is as follows. Siderophore transporter; part of the gene cluster 14 that mediates the biosynthesis of a ferrichrome A-like siderophors which may contribute to organismal virulence. In Zymoseptoria tritici (strain CBS 115943 / IPO323) (Speckled leaf blotch fungus), this protein is Siderophore transporter MYCGRDRAFT_70577.